Reading from the N-terminus, the 778-residue chain is Endonuclease MutS2 (778 aa).

G328–T335 lines the ATP pocket. A Smr domain is found at L703–G778.

This sequence belongs to the DNA mismatch repair MutS family. MutS2 subfamily. In terms of assembly, homodimer. Binds to stalled ribosomes, contacting rRNA.

Its function is as follows. Endonuclease that is involved in the suppression of homologous recombination and thus may have a key role in the control of bacterial genetic diversity. Acts as a ribosome collision sensor, splitting the ribosome into its 2 subunits. Detects stalled/collided 70S ribosomes which it binds and splits by an ATP-hydrolysis driven conformational change. Acts upstream of the ribosome quality control system (RQC), a ribosome-associated complex that mediates the extraction of incompletely synthesized nascent chains from stalled ribosomes and their subsequent degradation. Probably generates substrates for RQC. This chain is Endonuclease MutS2, found in Streptococcus equi subsp. zooepidemicus (strain H70).